The chain runs to 283 residues: Pantothenate synthetase (283 aa).

30 to 37 contributes to the ATP binding site; that stretch reads MGNLHDGH. His-37 (proton donor) is an active-site residue. Gln-61 contributes to the (R)-pantoate binding site. Residue Gln-61 coordinates beta-alanine. 149–152 is a binding site for ATP; that stretch reads GEKD. Gln-155 contacts (R)-pantoate. 186–189 lines the ATP pocket; it reads LSSR.

This sequence belongs to the pantothenate synthetase family. Homodimer.

The protein resides in the cytoplasm. It carries out the reaction (R)-pantoate + beta-alanine + ATP = (R)-pantothenate + AMP + diphosphate + H(+). It functions in the pathway cofactor biosynthesis; (R)-pantothenate biosynthesis; (R)-pantothenate from (R)-pantoate and beta-alanine: step 1/1. Its function is as follows. Catalyzes the condensation of pantoate with beta-alanine in an ATP-dependent reaction via a pantoyl-adenylate intermediate. The sequence is that of Pantothenate synthetase from Escherichia coli O6:H1 (strain CFT073 / ATCC 700928 / UPEC).